The following is a 357-amino-acid chain: MNTSTTTKSKNKPPKSTPSTFIKIIEFWFYLIQILTVLFSWRVYFLFIDSKKKIENNNNNDNDNNNTNKNDEKRYLTFKEKVQHNFFCLFTDTLYFMMLIITCTLFFWRLKDTLSLLKKSDSSKYKQIIWDQFSGGFVEFGSFTVLLLLKWPVIFKVFWNKGTEKEDKSTWSQIFMREFSQEVDKNKLGGPKPPTTNTTNFSGNGSSSSTTNATSSSSSQANNKRAMSDDEWRHAFRRDLQNIGFEFDSQTGDVSKFPPTEVMEQYQKSAEFRDLILASGSLKAGSEQQDKNKNNNNNNNNNGPKIEEYDNQKQEEEENEEKETNKQQTQKDDEKETSTTTTSSNKKSKKGKKNKRN.

3 consecutive transmembrane segments (helical) span residues 21–41, 86–106, and 135–155; these read FIKI…LFSW, FFCL…CTLF, and GGFV…PVIF. 2 disordered regions span residues 184–229 and 283–357; these read DKNK…AMSD and KAGS…NKRN. Low complexity predominate over residues 195-223; that stretch reads TTNTTNFSGNGSSSSTTNATSSSSSQANN. 2 stretches are compositionally biased toward basic and acidic residues: residues 305–314 and 322–337; these read KIEEYDNQKQ and KETN…EKET. A coiled-coil region spans residues 305 to 337; it reads KIEEYDNQKQEEEENEEKETNKQQTQKDDEKET. A compositionally biased stretch (basic residues) spans 346–357; the sequence is KKSKKGKKNKRN.

It localises to the membrane. This is an uncharacterized protein from Dictyostelium discoideum (Social amoeba).